We begin with the raw amino-acid sequence, 943 residues long: 2-oxoglutarate dehydrogenase E1 component (943 aa).

Belongs to the alpha-ketoglutarate dehydrogenase family. As to quaternary structure, homodimer. Part of the 2-oxoglutarate dehydrogenase (OGDH) complex composed of E1 (2-oxoglutarate dehydrogenase), E2 (dihydrolipoamide succinyltransferase) and E3 (dihydrolipoamide dehydrogenase); the complex contains multiple copies of the three enzymatic components (E1, E2 and E3). Requires thiamine diphosphate as cofactor.

It carries out the reaction N(6)-[(R)-lipoyl]-L-lysyl-[protein] + 2-oxoglutarate + H(+) = N(6)-[(R)-S(8)-succinyldihydrolipoyl]-L-lysyl-[protein] + CO2. Functionally, E1 component of the 2-oxoglutarate dehydrogenase (OGDH) complex which catalyzes the decarboxylation of 2-oxoglutarate, the first step in the conversion of 2-oxoglutarate to succinyl-CoA and CO(2). The sequence is that of 2-oxoglutarate dehydrogenase E1 component (sucA) from Azotobacter vinelandii.